We begin with the raw amino-acid sequence, 760 residues long: General transcription and DNA repair factor IIH helicase subunit XPD (760 aa).

The region spanning glycine 7–aspartate 283 is the Helicase ATP-binding domain. Methionine 42–threonine 49 lines the ATP pocket. Residues cysteine 116, cysteine 134, cysteine 155, and cysteine 190 each contribute to the [4Fe-4S] cluster site. A DEAH box motif is present at residues aspartate 234 to histidine 237. Residues methionine 438 to leucine 637 form a mediates interaction with MMS19 region. The Nuclear localization signal motif lies at lysine 682–arginine 695.

It belongs to the helicase family. RAD3/XPD subfamily. In terms of assembly, component of the 7-subunit TFIIH core complex composed of XPB/ERCC3, XPD/ERCC2, GTF2H1, GTF2H2, GTF2H3, GTF2H4 and GTF2H5, which is active in NER. The core complex associates with the 3-subunit CDK-activating kinase (CAK) module composed of CCNH/cyclin H, CDK7 and MNAT1 to form the 10-subunit holoenzyme (holo-TFIIH) active in transcription. The interaction with GTF2H2 results in the stimulation of the 5'--&gt;3' helicase activity. Component of the MMXD complex, which includes CIAO1, ERCC2, CIAO2B, MMS19 and SLC25A5. Interacts with CIAO1 and CIAO2B; the interaction WITH CIAO2B is direct. Interacts with ATF7IP. Interacts directly with MMS19. Part of TBP-based Pol II pre-initiation complex (PIC), in which Pol II core assembles with general transcription factors and other specific initiation factors including GTF2E1, GTF2E2, GTF2F1, GTF2F2, TCEA1, ERCC2, ERCC3, GTF2H2, GTF2H3, GTF2H4, GTF2H5, GTF2A1, GTF2A2, GTF2B and TBP; this large multi-subunit PIC complex mediates DNA unwinding and targets Pol II core to the transcription start site where the first phosphodiester bond forms. Mg(2+) is required as a cofactor. Requires [4Fe-4S] cluster as cofactor. Post-translationally, ISGylated.

Its subcellular location is the nucleus. The protein localises to the cytoplasm. It is found in the cytoskeleton. It localises to the spindle. The enzyme catalyses Couples ATP hydrolysis with the unwinding of duplex DNA at the replication fork by translocating in the 5'-3' direction. This creates two antiparallel DNA single strands (ssDNA). The leading ssDNA polymer is the template for DNA polymerase III holoenzyme which synthesizes a continuous strand.. The catalysed reaction is ATP + H2O = ADP + phosphate + H(+). In terms of biological role, ATP-dependent 5'-3' DNA helicase. Component of the general transcription and DNA repair factor IIH (TFIIH) core complex which is involved in general and transcription-coupled nucleotide excision repair (NER) of damaged DNA. When complexed to CDK-activating kinase (CAK), involved in transcription by RNA polymerase II. In NER, TFIIH acts by opening DNA around the lesion to allow the excision of the damaged oligonucleotide and its replacement by a new DNA fragment. The ATP-dependent helicase activity of XPD/ERCC2 is required for DNA opening. In transcription, TFIIH has an essential role in transcription initiation. When the pre-initiation complex (PIC) has been established, TFIIH is required for promoter opening and promoter escape. Phosphorylation of the C-terminal tail (CTD) of the largest subunit of RNA polymerase II by the kinase module CAK controls the initiation of transcription. XPD/ERCC2 acts by forming a bridge between CAK and the core-TFIIH complex. Involved in the regulation of vitamin-D receptor activity. As part of the mitotic spindle-associated MMXD complex it plays a role in chromosome segregation. Might have a role in aging process and could play a causative role in the generation of skin cancers. The sequence is that of General transcription and DNA repair factor IIH helicase subunit XPD from Cricetulus griseus (Chinese hamster).